The chain runs to 128 residues: UPF0325 protein KPN78578_01770 (128 aa).

It belongs to the UPF0325 family.

The sequence is that of UPF0325 protein KPN78578_01770 from Klebsiella pneumoniae subsp. pneumoniae (strain ATCC 700721 / MGH 78578).